The following is a 231-amino-acid chain: NADH-ubiquinone oxidoreductase chain 4 (231 aa).

6 helical membrane passes run 1–21 (PIAG…YGII), 34–54 (MFLP…LTCL), 61–80 (SLIA…AIII), 85–107 (GLAG…FCLA), 128–148 (ILPM…AIPP), and 169–189 (TIIL…HMFL).

This sequence belongs to the complex I subunit 4 family.

The protein resides in the mitochondrion membrane. It carries out the reaction a ubiquinone + NADH + 5 H(+)(in) = a ubiquinol + NAD(+) + 4 H(+)(out). Core subunit of the mitochondrial membrane respiratory chain NADH dehydrogenase (Complex I) that is believed to belong to the minimal assembly required for catalysis. Complex I functions in the transfer of electrons from NADH to the respiratory chain. The immediate electron acceptor for the enzyme is believed to be ubiquinone. The chain is NADH-ubiquinone oxidoreductase chain 4 (MT-ND4) from Gloydius blomhoffii (Mamushi).